We begin with the raw amino-acid sequence, 98 residues long: Co-chaperonin GroES (98 aa).

It belongs to the GroES chaperonin family. In terms of assembly, heptamer of 7 subunits arranged in a ring. Interacts with the chaperonin GroEL.

The protein resides in the cytoplasm. Its function is as follows. Together with the chaperonin GroEL, plays an essential role in assisting protein folding. The GroEL-GroES system forms a nano-cage that allows encapsulation of the non-native substrate proteins and provides a physical environment optimized to promote and accelerate protein folding. GroES binds to the apical surface of the GroEL ring, thereby capping the opening of the GroEL channel. The sequence is that of Co-chaperonin GroES from Leifsonia xyli subsp. xyli (strain CTCB07).